The following is a 125-amino-acid chain: Holo-[acyl-carrier-protein] synthase (125 aa).

Residues aspartate 9 and glutamate 58 each coordinate Mg(2+).

It belongs to the P-Pant transferase superfamily. AcpS family. Mg(2+) serves as cofactor.

It is found in the cytoplasm. It catalyses the reaction apo-[ACP] + CoA = holo-[ACP] + adenosine 3',5'-bisphosphate + H(+). Functionally, transfers the 4'-phosphopantetheine moiety from coenzyme A to a Ser of acyl-carrier-protein. The polypeptide is Holo-[acyl-carrier-protein] synthase (Shewanella amazonensis (strain ATCC BAA-1098 / SB2B)).